Here is a 90-residue protein sequence, read N- to C-terminus: MAVKIRLTRMGSKKKPFYRINVADSRSPRDGRFIETVGTYNPLVAENQVTLKEDRVLTWLANGAQPSDTVRNILSKEGVLKKFHDSKFSK.

The protein belongs to the bacterial ribosomal protein bS16 family.

This is Small ribosomal subunit protein bS16 from Streptococcus pneumoniae serotype 19F (strain G54).